A 284-amino-acid polypeptide reads, in one-letter code: NADH-cytochrome b5 reductase 1 (284 aa).

The helical transmembrane segment at 8–28 (PLVIFSTLAAIILAAVAVYVV) threads the bilayer. In terms of domain architecture, FAD-binding FR-type spans 41–144 (DVFQKFPLIE…RGPKGFFTYT (104 aa)). FAD is bound by residues 124 to 139 (DSKS…GPKG) and 150 to 182 (HLGM…KISL).

Belongs to the flavoprotein pyridine nucleotide cytochrome reductase family. As to quaternary structure, monomer. Component of the 2-(3-amino-3-carboxypropyl)histidine synthase complex composed of DPH1, DPH2, DPH3 and a NADH-dependent reductase, predominantly CBR1. Requires FAD as cofactor.

The protein localises to the mitochondrion outer membrane. The catalysed reaction is 2 Fe(III)-[cytochrome b5] + NADH = 2 Fe(II)-[cytochrome b5] + NAD(+) + H(+). It carries out the reaction 2 Fe(3+)-[Dph3] + NADH = 2 Fe(2+)-[Dph3] + NAD(+) + H(+). Its pathway is protein modification; peptidyl-diphthamide biosynthesis. In terms of biological role, NADH-dependent reductase for DPH3 and cytochrome b5. Required for the first step of diphthamide biosynthesis, a post-translational modification of histidine which occurs in elongation factor 2. DPH1 and DPH2 transfer a 3-amino-3-carboxypropyl (ACP) group from S-adenosyl-L-methionine (SAM) to a histidine residue, the reaction is assisted by a reduction system comprising DPH3 and a NADH-dependent reductase, predominantly CBR1. By reducing DPH3, also involved in the formation of the tRNA wobble base modification mcm5s 2U (5-methoxycarbonylmethyl-2-thiouridine), mediated by the elongator complex. The cytochrome b5/NADH cytochrome b5 reductase electron transfer system supports the catalytic activity of several sterol biosynthetic enzymes. This Meyerozyma guilliermondii (strain ATCC 6260 / CBS 566 / DSM 6381 / JCM 1539 / NBRC 10279 / NRRL Y-324) (Yeast) protein is NADH-cytochrome b5 reductase 1 (CBR1).